The sequence spans 234 residues: Sugar fermentation stimulation protein A (234 aa).

A DNA-binding region (H-T-H motif) is located at residues 201 to 220; that stretch reads LLSEAQQRGVEILAYKAELS.

Belongs to the SfsA family.

Functionally, binds to DNA non-specifically. Could be a regulatory factor involved in maltose metabolism. This chain is Sugar fermentation stimulation protein A, found in Escherichia coli (strain SMS-3-5 / SECEC).